Reading from the N-terminus, the 181-residue chain is Adenylate kinase (181 aa).

Position 7–15 (7–15) interacts with ATP; sequence GVAGVGKTT.

Belongs to the archaeal adenylate kinase family.

Its subcellular location is the cytoplasm. It catalyses the reaction AMP + ATP = 2 ADP. This Thermoplasma volcanium (strain ATCC 51530 / DSM 4299 / JCM 9571 / NBRC 15438 / GSS1) protein is Adenylate kinase (adkA).